A 332-amino-acid polypeptide reads, in one-letter code: tRNA U34 carboxymethyltransferase (332 aa).

Carboxy-S-adenosyl-L-methionine is bound by residues Lys-91, Trp-105, Lys-110, Gly-130, 152 to 154 (DPS), 181 to 182 (IE), Met-196, Tyr-200, and Arg-315.

It belongs to the class I-like SAM-binding methyltransferase superfamily. CmoB family. As to quaternary structure, homotetramer.

The catalysed reaction is carboxy-S-adenosyl-L-methionine + 5-hydroxyuridine(34) in tRNA = 5-carboxymethoxyuridine(34) in tRNA + S-adenosyl-L-homocysteine + H(+). Catalyzes carboxymethyl transfer from carboxy-S-adenosyl-L-methionine (Cx-SAM) to 5-hydroxyuridine (ho5U) to form 5-carboxymethoxyuridine (cmo5U) at position 34 in tRNAs. This chain is tRNA U34 carboxymethyltransferase, found in Shewanella putrefaciens (strain CN-32 / ATCC BAA-453).